Here is a 1036-residue protein sequence, read N- to C-terminus: Protein translocase subunit SecA, chloroplastic (1036 aa).

Residues 1 to 76 (MESCARSASQ…KIGELMQVRA (76 aa)) constitute a chloroplast transit peptide. 186–193 (MRTGEGKT) provides a ligand contact to ATP. Residues 995 to 1036 (NQEQQQKGKPDSSNVENKRIGDANLNPVSVTESPSSDSPQNT) are disordered. The span at 1000-1015 (QKGKPDSSNVENKRIG) shows a compositional bias: basic and acidic residues. Residues 1020-1036 (NPVSVTESPSSDSPQNT) show a composition bias toward polar residues.

Belongs to the SecA family.

Its subcellular location is the plastid. The protein resides in the chloroplast stroma. It localises to the chloroplast thylakoid membrane. It catalyses the reaction ATP + H2O + chloroplast-proteinSide 1 = ADP + phosphate + chloroplast-proteinSide 2.. In terms of biological role, has a central role in coupling the hydrolysis of ATP to the transfer of proteins across the thylakoid membrane. The chain is Protein translocase subunit SecA, chloroplastic from Spinacia oleracea (Spinach).